We begin with the raw amino-acid sequence, 378 residues long: Queuine tRNA-ribosyltransferase (378 aa).

Aspartate 90 functions as the Proton acceptor in the catalytic mechanism. Substrate is bound by residues 90-94 (DSGGF), aspartate 144, glutamine 188, and glycine 220. The tract at residues 251–257 (GVGTPED) is RNA binding. Aspartate 270 functions as the Nucleophile in the catalytic mechanism. An RNA binding; important for wobble base 34 recognition region spans residues 275–279 (TRNAR). Residues cysteine 308, cysteine 310, cysteine 313, and histidine 339 each contribute to the Zn(2+) site.

This sequence belongs to the queuine tRNA-ribosyltransferase family. In terms of assembly, homodimer. Within each dimer, one monomer is responsible for RNA recognition and catalysis, while the other monomer binds to the replacement base PreQ1. Zn(2+) is required as a cofactor.

The enzyme catalyses 7-aminomethyl-7-carbaguanine + guanosine(34) in tRNA = 7-aminomethyl-7-carbaguanosine(34) in tRNA + guanine. It functions in the pathway tRNA modification; tRNA-queuosine biosynthesis. Its function is as follows. Catalyzes the base-exchange of a guanine (G) residue with the queuine precursor 7-aminomethyl-7-deazaguanine (PreQ1) at position 34 (anticodon wobble position) in tRNAs with GU(N) anticodons (tRNA-Asp, -Asn, -His and -Tyr). Catalysis occurs through a double-displacement mechanism. The nucleophile active site attacks the C1' of nucleotide 34 to detach the guanine base from the RNA, forming a covalent enzyme-RNA intermediate. The proton acceptor active site deprotonates the incoming PreQ1, allowing a nucleophilic attack on the C1' of the ribose to form the product. After dissociation, two additional enzymatic reactions on the tRNA convert PreQ1 to queuine (Q), resulting in the hypermodified nucleoside queuosine (7-(((4,5-cis-dihydroxy-2-cyclopenten-1-yl)amino)methyl)-7-deazaguanosine). The chain is Queuine tRNA-ribosyltransferase from Nautilia profundicola (strain ATCC BAA-1463 / DSM 18972 / AmH).